Reading from the N-terminus, the 176-residue chain is Peptidyl-tRNA hydrolase (176 aa).

Tyr14 lines the tRNA pocket. His19 functions as the Proton acceptor in the catalytic mechanism. Positions 65, 67, and 113 each coordinate tRNA.

This sequence belongs to the PTH family. In terms of assembly, monomer.

Its subcellular location is the cytoplasm. It carries out the reaction an N-acyl-L-alpha-aminoacyl-tRNA + H2O = an N-acyl-L-amino acid + a tRNA + H(+). Hydrolyzes ribosome-free peptidyl-tRNAs (with 1 or more amino acids incorporated), which drop off the ribosome during protein synthesis, or as a result of ribosome stalling. Its function is as follows. Catalyzes the release of premature peptidyl moieties from peptidyl-tRNA molecules trapped in stalled 50S ribosomal subunits, and thus maintains levels of free tRNAs and 50S ribosomes. The protein is Peptidyl-tRNA hydrolase of Phytoplasma mali (strain AT).